We begin with the raw amino-acid sequence, 410 residues long: Probable peptidoglycan glycosyltransferase FtsW (410 aa).

Over 1-37 (MRSEERQLNLFGTSVNWSWPNLFKEREAPGMQLYDRA) the chain is Cytoplasmic. Residues 38 to 58 (LLFAVLSLICFGFVMVMSASM) form a helical membrane-spanning segment. Over 59–69 (PEAQSLTGNPY) the chain is Periplasmic. The helical transmembrane segment at 70-90 (HFAIRHFAYLVGCAVIAAVVL) threads the bilayer. The Cytoplasmic segment spans residues 91–99 (RIEMSRWQQ). Residues 100 to 120 (FSPLLLLIVGIMLVAVLLVGT) form a helical membrane-spanning segment. Over 121–131 (SVNGATRWLSV) the chain is Periplasmic. The chain crosses the membrane as a helical span at residues 132-154 (GPIRIQVAELAKFAFTIYMAGYL). The Cytoplasmic portion of the chain corresponds to 155-163 (VRRHQEIRE). Residues 164–184 (NAKGFYKPIAVFAVYAFLILM) form a helical membrane-spanning segment. Over 185–186 (QP) the chain is Periplasmic. Residues 187–207 (DLGTVVVLFVGTVGLLFLAGA) form a helical membrane-spanning segment. Residue arginine 208 is a topological domain, cytoplasmic. A helical membrane pass occupies residues 209-229 (LLDFFALILTGVMAFVALVLL). The Periplasmic portion of the chain corresponds to 230 to 291 (EPYRMRRVTS…PEAHTDFIFA (62 aa)). Residues 292–312 (VIGEELGFIGIVVVLSVLLFV) form a helical membrane-spanning segment. At 313–336 (ALRAIKLGNLCIEIDKPFEGYLAY) the chain is on the cytoplasmic side. A helical transmembrane segment spans residues 337 to 357 (AIGIWFCFQTVVNVGASIGML). Over 358–364 (PTKGLTL) the chain is Periplasmic. The chain crosses the membrane as a helical span at residues 365 to 385 (PFISYGGSSLWVMTAAAMILI). Over 386–410 (RIDHERRLSSIQAVQGKKVNDNREY) the chain is Cytoplasmic.

It belongs to the SEDS family. FtsW subfamily.

It is found in the cell inner membrane. It catalyses the reaction [GlcNAc-(1-&gt;4)-Mur2Ac(oyl-L-Ala-gamma-D-Glu-L-Lys-D-Ala-D-Ala)](n)-di-trans,octa-cis-undecaprenyl diphosphate + beta-D-GlcNAc-(1-&gt;4)-Mur2Ac(oyl-L-Ala-gamma-D-Glu-L-Lys-D-Ala-D-Ala)-di-trans,octa-cis-undecaprenyl diphosphate = [GlcNAc-(1-&gt;4)-Mur2Ac(oyl-L-Ala-gamma-D-Glu-L-Lys-D-Ala-D-Ala)](n+1)-di-trans,octa-cis-undecaprenyl diphosphate + di-trans,octa-cis-undecaprenyl diphosphate + H(+). It functions in the pathway cell wall biogenesis; peptidoglycan biosynthesis. Functionally, peptidoglycan polymerase that is essential for cell division. The polypeptide is Probable peptidoglycan glycosyltransferase FtsW (Shewanella sediminis (strain HAW-EB3)).